The following is a 389-amino-acid chain: Chorismate synthase (389 aa).

Arg40 and Arg46 together coordinate NADP(+). FMN-binding positions include Arg130–Ser132, Gln251–Ala252, Gly297, Lys312–Thr316, and Arg338.

It belongs to the chorismate synthase family. As to quaternary structure, homotetramer. It depends on FMNH2 as a cofactor.

It carries out the reaction 5-O-(1-carboxyvinyl)-3-phosphoshikimate = chorismate + phosphate. It participates in metabolic intermediate biosynthesis; chorismate biosynthesis; chorismate from D-erythrose 4-phosphate and phosphoenolpyruvate: step 7/7. Its function is as follows. Catalyzes the anti-1,4-elimination of the C-3 phosphate and the C-6 proR hydrogen from 5-enolpyruvylshikimate-3-phosphate (EPSP) to yield chorismate, which is the branch point compound that serves as the starting substrate for the three terminal pathways of aromatic amino acid biosynthesis. This reaction introduces a second double bond into the aromatic ring system. The protein is Chorismate synthase of Solibacter usitatus (strain Ellin6076).